Consider the following 40-residue polypeptide: MPCPCGSGCKCASQATKGSCNCGSDCKCGGDKKSACGCSK.

It belongs to the metallothionein superfamily. Type 5 family.

This protein binds cations of several transition elements. It is thought to be involved in detoxification processes. In Drosophila ananassae (Fruit fly), this protein is Metallothionein-1 (MtnA).